The chain runs to 329 residues: Phosphoenolpyruvate transferase (329 aa).

Asp61 is a binding site for 7,8-didemethyl-8-hydroxy-5-deazariboflavin.

This sequence belongs to the CofD family. As to quaternary structure, homodimer. It depends on Mg(2+) as a cofactor.

The enzyme catalyses enolpyruvoyl-2-diphospho-5'-guanosine + 7,8-didemethyl-8-hydroxy-5-deazariboflavin = dehydro coenzyme F420-0 + GMP + H(+). The protein operates within cofactor biosynthesis; coenzyme F420 biosynthesis. Its function is as follows. Catalyzes the transfer of the phosphoenolpyruvate moiety from enoylpyruvoyl-2-diphospho-5'-guanosine (EPPG) to 7,8-didemethyl-8-hydroxy-5-deazariboflavin (FO) with the formation of dehydro coenzyme F420-0 and GMP. In Mycobacterium ulcerans (strain Agy99), this protein is Phosphoenolpyruvate transferase.